Consider the following 172-residue polypeptide: TAVTLVTATLAAASATFPTVRRSVSSSPAAKQPAPGTVAQSFPPGELALRDETGGRGRGTRGIRRTPTAAQGVITPGVAETPAIVRIANPGLPLDRHVFQPVCGLRLLAVWLLVLNLNVALPVTARTPQVVRVVDYATPTLFALQERHEIELVGRRPRLTDETPTALESKDK.

The segment at 22 to 64 (RSVSSSPAAKQPAPGTVAQSFPPGELALRDETGGRGRGTRGIR) is disordered.

This is an uncharacterized protein from Human cytomegalovirus (strain AD169) (HHV-5).